Consider the following 189-residue polypeptide: MRKIGIFGGTFDPPHNGHLLMANEVLYKLDLDEIWFMPNQIPPHKQKNSFSLSMHRVEMLKLAISGKEQFKLETIELEREGPSYTFDTVRLLKDRYPDHEFYFIIGADMVEYLPKWSNIDKLVNMIQFVGVKRPGFQIETPYPLVFVDVPIFEVSSSLLRDRIKNRQPTDYLIPDEVKVYVKENRLYET.

Belongs to the NadD family.

It catalyses the reaction nicotinate beta-D-ribonucleotide + ATP + H(+) = deamido-NAD(+) + diphosphate. It participates in cofactor biosynthesis; NAD(+) biosynthesis; deamido-NAD(+) from nicotinate D-ribonucleotide: step 1/1. Functionally, catalyzes the reversible adenylation of nicotinate mononucleotide (NaMN) to nicotinic acid adenine dinucleotide (NaAD). This chain is Probable nicotinate-nucleotide adenylyltransferase, found in Bacillus licheniformis (strain ATCC 14580 / DSM 13 / JCM 2505 / CCUG 7422 / NBRC 12200 / NCIMB 9375 / NCTC 10341 / NRRL NRS-1264 / Gibson 46).